The sequence spans 130 residues: Small ribosomal subunit protein uS11 (130 aa).

The protein belongs to the universal ribosomal protein uS11 family. Part of the 30S ribosomal subunit. Interacts with proteins S7 and S18. Binds to IF-3.

In terms of biological role, located on the platform of the 30S subunit, it bridges several disparate RNA helices of the 16S rRNA. Forms part of the Shine-Dalgarno cleft in the 70S ribosome. In Synechococcus sp. (strain WH7803), this protein is Small ribosomal subunit protein uS11.